The primary structure comprises 197 residues: MVKVGVIGLQGDVEEHIWAARRALENLGVSGDVIWLKKPEQLENISAIIIPGGESTTISRLMVKNGLFEPVKKLGEEGLPIMGTCAGLIMLSKEVIGATPEQKFLELLDVKVNRNAYGRQVDSFEAPIKLAFSGEPFPGVFIRAPRIVELLSERVKPIAWLGDRVVGVEQDNIIGLEFHPELTDDTRVHEYFLRKAV.

53–55 (GES) contributes to the L-glutamine binding site. Cys-85 serves as the catalytic Nucleophile. L-glutamine contacts are provided by residues Arg-114 and 142-143 (IR). Catalysis depends on charge relay system residues His-179 and Glu-181.

The protein belongs to the glutaminase PdxT/SNO family. In the presence of PdxS, forms a dodecamer of heterodimers. Only shows activity in the heterodimer.

It catalyses the reaction aldehydo-D-ribose 5-phosphate + D-glyceraldehyde 3-phosphate + L-glutamine = pyridoxal 5'-phosphate + L-glutamate + phosphate + 3 H2O + H(+). The enzyme catalyses L-glutamine + H2O = L-glutamate + NH4(+). The protein operates within cofactor biosynthesis; pyridoxal 5'-phosphate biosynthesis. In terms of biological role, catalyzes the hydrolysis of glutamine to glutamate and ammonia as part of the biosynthesis of pyridoxal 5'-phosphate. The resulting ammonia molecule is channeled to the active site of PdxS. The polypeptide is Pyridoxal 5'-phosphate synthase subunit PdxT (Thermococcus kodakarensis (strain ATCC BAA-918 / JCM 12380 / KOD1) (Pyrococcus kodakaraensis (strain KOD1))).